A 652-amino-acid chain; its full sequence is Acetyl-coenzyme A synthetase (652 aa).

CoA contacts are provided by residues 189–192 (RGGK) and Ser-311. ATP is bound by residues 387–389 (GEP), 411–416 (DTWWQT), Asp-500, and Arg-515. Ser-523 lines the CoA pocket. Arg-526 contacts ATP. Residues Val-537, His-539, and Ile-542 each coordinate Mg(2+). A CoA-binding site is contributed by Lys-584. Lys-609 bears the N6-acetyllysine mark.

The protein belongs to the ATP-dependent AMP-binding enzyme family. It depends on Mg(2+) as a cofactor. In terms of processing, acetylated. Deacetylation by the SIR2-homolog deacetylase activates the enzyme.

It carries out the reaction acetate + ATP + CoA = acetyl-CoA + AMP + diphosphate. Functionally, catalyzes the conversion of acetate into acetyl-CoA (AcCoA), an essential intermediate at the junction of anabolic and catabolic pathways. AcsA undergoes a two-step reaction. In the first half reaction, AcsA combines acetate with ATP to form acetyl-adenylate (AcAMP) intermediate. In the second half reaction, it can then transfer the acetyl group from AcAMP to the sulfhydryl group of CoA, forming the product AcCoA. This is Acetyl-coenzyme A synthetase from Bartonella quintana (strain Toulouse) (Rochalimaea quintana).